The chain runs to 323 residues: Tetraacyldisaccharide 4'-kinase (323 aa).

Residue 56–63 coordinates ATP; it reads TVGGVGKT.

Belongs to the LpxK family.

It carries out the reaction a lipid A disaccharide + ATP = a lipid IVA + ADP + H(+). It participates in glycolipid biosynthesis; lipid IV(A) biosynthesis; lipid IV(A) from (3R)-3-hydroxytetradecanoyl-[acyl-carrier-protein] and UDP-N-acetyl-alpha-D-glucosamine: step 6/6. Its function is as follows. Transfers the gamma-phosphate of ATP to the 4'-position of a tetraacyldisaccharide 1-phosphate intermediate (termed DS-1-P) to form tetraacyldisaccharide 1,4'-bis-phosphate (lipid IVA). This Legionella pneumophila (strain Lens) protein is Tetraacyldisaccharide 4'-kinase.